The following is a 606-amino-acid chain: 1-deoxy-D-xylulose-5-phosphate synthase (606 aa).

Thiamine diphosphate is bound by residues His-63 and 104–106 (GHS). Position 137 (Asp-137) interacts with Mg(2+). Thiamine diphosphate-binding positions include 138–139 (GS), Asn-166, Tyr-273, and Glu-354. Asn-166 contributes to the Mg(2+) binding site.

It belongs to the transketolase family. DXPS subfamily. In terms of assembly, homodimer. The cofactor is Mg(2+). Thiamine diphosphate is required as a cofactor.

It carries out the reaction D-glyceraldehyde 3-phosphate + pyruvate + H(+) = 1-deoxy-D-xylulose 5-phosphate + CO2. Its pathway is metabolic intermediate biosynthesis; 1-deoxy-D-xylulose 5-phosphate biosynthesis; 1-deoxy-D-xylulose 5-phosphate from D-glyceraldehyde 3-phosphate and pyruvate: step 1/1. Catalyzes the acyloin condensation reaction between C atoms 2 and 3 of pyruvate and glyceraldehyde 3-phosphate to yield 1-deoxy-D-xylulose-5-phosphate (DXP). In Sulfurimonas denitrificans (strain ATCC 33889 / DSM 1251) (Thiomicrospira denitrificans (strain ATCC 33889 / DSM 1251)), this protein is 1-deoxy-D-xylulose-5-phosphate synthase.